A 403-amino-acid chain; its full sequence is MAKNINVQQSHWANPDKLEVELAERKGVGHPDYIADSASEEASRKLSLYYLKAFGTILHHNLDKTLVVGGQATPKYKGGDVVQPIYVIVSGRATTEVKTPSGVENIPIGTIIIESVKDWIKENFRYLDVEKHVVVDYKIGKGSTDLVGLFEANKQVPLSNDTSFGVGFAPYSTLENLVLSTERLLNSKEIRSKIPEIGEDIKVMGLRKGKEIELTVAMATISQLIDDLNHYLQVKEEAKQKILDLASKLAPEYSVKVNINTGDKIDKGIVYLTVTGTSAEHGDDGMTGRGNRATGLITPMRPMSLEATAGKNPVNHVGKLYNVLANLIAQKVHKDVKGINGVQVEILGQIGRPINDPLIANVQLAAENITTEIKREVEGITDELLSSVTKLSELILESKTMLF.

Position 140–145 (140–145) interacts with ATP; sequence GKGSTD.

It belongs to the AdoMet synthase 2 family. The cofactor is Mg(2+).

The enzyme catalyses L-methionine + ATP + H2O = S-adenosyl-L-methionine + phosphate + diphosphate. It participates in amino-acid biosynthesis; S-adenosyl-L-methionine biosynthesis; S-adenosyl-L-methionine from L-methionine: step 1/1. In terms of biological role, catalyzes the formation of S-adenosylmethionine from methionine and ATP. This Sulfolobus acidocaldarius (strain ATCC 33909 / DSM 639 / JCM 8929 / NBRC 15157 / NCIMB 11770) protein is S-adenosylmethionine synthase.